Here is a 64-residue protein sequence, read N- to C-terminus: Large ribosomal subunit protein bL35 (64 aa).

Residues 1–26 (MPKIKTHRGAAKRFKKTGTGKIKRSK) are compositionally biased toward basic residues. Residues 1 to 48 (MPKIKTHRGAAKRFKKTGTGKIKRSKAYASHLLGGKSPKRKRNLRKAG) form a disordered region.

This sequence belongs to the bacterial ribosomal protein bL35 family.

This chain is Large ribosomal subunit protein bL35, found in Syntrophomonas wolfei subsp. wolfei (strain DSM 2245B / Goettingen).